Here is an 874-residue protein sequence, read N- to C-terminus: Coatomer subunit gamma-1 (874 aa).

Positions Met-1–Glu-11 are enriched in basic and acidic residues. Positions Met-1–His-21 are disordered. HEAT repeat units lie at residues Thr-64–Asp-101, Lys-283–Ser-320, Val-322–Ser-355, and Ser-356–Arg-392. The residue at position 594 (Thr-594) is a Phosphothreonine. The interaction with ZNF289/ARFGAP2 stretch occupies residues Arg-609–Gly-874.

It belongs to the COPG family. Oligomeric complex that consists of at least the alpha, beta, beta', gamma, delta, epsilon and zeta subunits. Interacts with ZNF289/ARFGAP2 through its C-terminal appendage domain. Interacts with EGFR upon EGF treatment; interaction is essential for regulation of EGF-dependent nuclear transport of EGFR by retrograde trafficking from the Golgi to the ER. The coatomer interacts with KDEL receptors; the interaction is important for retrograde trafficking of KDEL-bearing proteins from the Golgi to the endoplasmic reticulum. Interacts with COPB1. Interacts with TMED10 (via C-terminus). Interacts with TMED2, TMED3, TMED7 and TMED9.

It is found in the cytoplasm. It localises to the golgi apparatus membrane. The protein resides in the cytoplasmic vesicle. The protein localises to the COPI-coated vesicle membrane. The coatomer is a cytosolic protein complex that binds to dilysine motifs and reversibly associates with Golgi non-clathrin-coated vesicles, which further mediate biosynthetic protein transport from the ER, via the Golgi up to the trans Golgi network. Coatomer complex is required for budding from Golgi membranes, and is essential for the retrograde Golgi-to-ER transport of dilysine-tagged proteins. In mammals, the coatomer can only be recruited by membranes associated to ADP-ribosylation factors (ARFs), which are small GTP-binding proteins; the complex also influences the Golgi structural integrity, as well as the processing, activity, and endocytic recycling of LDL receptors. Required for limiting lipid storage in lipid droplets. Involved in lipid homeostasis by regulating the presence of perilipin family members PLIN2 and PLIN3 at the lipid droplet surface and promoting the association of adipocyte triglyceride lipase (PNPLA2) with the lipid droplet surface to mediate lipolysis. The sequence is that of Coatomer subunit gamma-1 (COPG1) from Homo sapiens (Human).